Here is a 35-residue protein sequence, read N- to C-terminus: uncharacterized protein (35 aa).

Residues 10–30 (LMITASFFAIFIIIVVSVLLL) form a helical membrane-spanning segment.

The protein resides in the membrane. This is an uncharacterized protein from Salmonella paratyphi A (strain ATCC 9150 / SARB42).